A 411-amino-acid polypeptide reads, in one-letter code: Putative glycosyltransferase SCO3672 (411 aa).

10 consecutive transmembrane segments (helical) span residues 7 to 27 (IAAA…LAAL), 45 to 65 (PVPL…AWAG), 70 to 90 (VVPL…VGAL), 120 to 140 (ETGP…TGAF), 148 to 168 (GVVG…AAVE), 169 to 189 (LMDG…GFLL), 197 to 217 (IALG…AAVL), 227 to 247 (GAGV…LVLL), 277 to 297 (GVVV…VLAH), and 301 to 321 (VGGQ…LGLL).

This sequence belongs to the glycosyltransferase 4 family.

It is found in the cell membrane. This Streptomyces coelicolor (strain ATCC BAA-471 / A3(2) / M145) protein is Putative glycosyltransferase SCO3672.